Reading from the N-terminus, the 305-residue chain is Ribonuclease BN (305 aa).

The Zn(2+) site is built by H64, H66, D68, H69, H141, D212, and H270. Catalysis depends on D68, which acts as the Proton acceptor.

Belongs to the RNase Z family. RNase BN subfamily. As to quaternary structure, homodimer. Requires Zn(2+) as cofactor.

Its function is as follows. Zinc phosphodiesterase, which has both exoribonuclease and endoribonuclease activities. The chain is Ribonuclease BN from Escherichia coli O6:K15:H31 (strain 536 / UPEC).